Here is a 504-residue protein sequence, read N- to C-terminus: Maturase K (504 aa).

The protein belongs to the intron maturase 2 family. MatK subfamily.

The protein resides in the plastid. It is found in the chloroplast. Usually encoded in the trnK tRNA gene intron. Probably assists in splicing its own and other chloroplast group II introns. The chain is Maturase K from Gossypium gossypioides (Mexican cotton).